A 338-amino-acid polypeptide reads, in one-letter code: 3-dehydroquinate synthase (338 aa).

Residues 58-63, 92-96, 116-117, Lys-129, and Lys-138 contribute to the NAD(+) site; these read DGERAK, GTTGD, and TT. Glu-169, His-229, and His-245 together coordinate Zn(2+).

Belongs to the sugar phosphate cyclases superfamily. Dehydroquinate synthase family. NAD(+) is required as a cofactor. It depends on Co(2+) as a cofactor. Requires Zn(2+) as cofactor.

The protein resides in the cytoplasm. It catalyses the reaction 7-phospho-2-dehydro-3-deoxy-D-arabino-heptonate = 3-dehydroquinate + phosphate. It participates in metabolic intermediate biosynthesis; chorismate biosynthesis; chorismate from D-erythrose 4-phosphate and phosphoenolpyruvate: step 2/7. In terms of biological role, catalyzes the conversion of 3-deoxy-D-arabino-heptulosonate 7-phosphate (DAHP) to dehydroquinate (DHQ). The protein is 3-dehydroquinate synthase of Picrophilus torridus (strain ATCC 700027 / DSM 9790 / JCM 10055 / NBRC 100828 / KAW 2/3).